The following is an 800-amino-acid chain: Phenylalanine--tRNA ligase beta subunit (800 aa).

The region spanning 39 to 152 (AAGLSKIVVG…EDAVPGEEVF (114 aa)) is the tRNA-binding domain. The 76-residue stretch at 405 to 480 (TSDVEVSSTL…RIYGYDRLPT (76 aa)) folds into the B5 domain. Residues Asp-458, Asp-464, Glu-467, and Glu-468 each contribute to the Mg(2+) site. Residues 707–800 (TKFPAVSRDV…LEEKVNAEVR (94 aa)) enclose the FDX-ACB domain.

It belongs to the phenylalanyl-tRNA synthetase beta subunit family. Type 1 subfamily. Tetramer of two alpha and two beta subunits. It depends on Mg(2+) as a cofactor.

It is found in the cytoplasm. The enzyme catalyses tRNA(Phe) + L-phenylalanine + ATP = L-phenylalanyl-tRNA(Phe) + AMP + diphosphate + H(+). The chain is Phenylalanine--tRNA ligase beta subunit from Streptococcus pneumoniae (strain ATCC BAA-255 / R6).